Here is a 117-residue protein sequence, read N- to C-terminus: Pterin-4-alpha-carbinolamine dehydratase 2 (117 aa).

3 positions are modified to N6-acetyllysine; alternate: K101, K105, and K112. An N6-succinyllysine; alternate mark is found at K101, K105, and K112.

Belongs to the pterin-4-alpha-carbinolamine dehydratase family. In terms of assembly, homotetramer. Interacts with DYRK1B.

It carries out the reaction (4aS,6R)-4a-hydroxy-L-erythro-5,6,7,8-tetrahydrobiopterin = (6R)-L-erythro-6,7-dihydrobiopterin + H2O. In terms of biological role, involved in tetrahydrobiopterin biosynthesis. Seems to both prevent the formation of 7-pterins and accelerate the formation of quinonoid-BH2. Its function is as follows. Regulates the dimerization of homeodomain protein HNF-1-alpha and enhances its transcriptional activity. The polypeptide is Pterin-4-alpha-carbinolamine dehydratase 2 (PCBD2) (Pongo abelii (Sumatran orangutan)).